Here is a 79-residue protein sequence, read N- to C-terminus: Keratin-associated protein 21-1 (79 aa).

As to quaternary structure, interacts with hair keratins.

In terms of biological role, in the hair cortex, hair keratin intermediate filaments are embedded in an interfilamentous matrix, consisting of hair keratin-associated proteins (KRTAP), which are essential for the formation of a rigid and resistant hair shaft through their extensive disulfide bond cross-linking with abundant cysteine residues of hair keratins. The matrix proteins include the high-sulfur and high-glycine-tyrosine keratins. This is Keratin-associated protein 21-1 (KRTAP21-1) from Homo sapiens (Human).